A 426-amino-acid polypeptide reads, in one-letter code: Glutamate-1-semialdehyde 2,1-aminomutase (426 aa).

Lys-265 carries the post-translational modification N6-(pyridoxal phosphate)lysine.

It belongs to the class-III pyridoxal-phosphate-dependent aminotransferase family. HemL subfamily. In terms of assembly, homodimer. It depends on pyridoxal 5'-phosphate as a cofactor.

The protein localises to the cytoplasm. It carries out the reaction (S)-4-amino-5-oxopentanoate = 5-aminolevulinate. The protein operates within porphyrin-containing compound metabolism; protoporphyrin-IX biosynthesis; 5-aminolevulinate from L-glutamyl-tRNA(Glu): step 2/2. The sequence is that of Glutamate-1-semialdehyde 2,1-aminomutase from Escherichia coli O7:K1 (strain IAI39 / ExPEC).